A 498-amino-acid chain; its full sequence is Ammonium transporter 1 member 3 (498 aa).

The next 11 helical transmembrane spans lie at 41–61 (LLFSAYLVFAMQLGFAMLCAG), 76–96 (VLDAAAGALFYYLFGFAFAFG), 122–142 (FFLFQWAFAIAAAGITSGSIA), 150–170 (YLIYSAFLTGFVYPVVSHWFW), 194–214 (FAGSGVVHLVGGIAGLWGAFI), 238–258 (LVVLGTFLLWFGWFGFNPGSF), 277–299 (AVGRTAVTTSLAGSVAALTTLYG), 307–327 (WNVTDVCNGLLGGFAAITAGC), 329–349 (VVDPWASVICGFVSAWVLIGC), 362–382 (LEATQLHAGCGAWGIIFTALF), and 414–434 (IVQILVIVGWVSATMGTLFYV). A disordered region spans residues 473–498 (RAKSAAETARVEPRKSPEQAAAGQFV).

Belongs to the ammonia transporter channel (TC 1.A.11.2) family. Expressed in roots.

It localises to the membrane. Functionally, ammonium transporter probably involved in ammonium uptake from the soil. This is Ammonium transporter 1 member 3 (AMT1-3) from Oryza sativa subsp. japonica (Rice).